Reading from the N-terminus, the 318-residue chain is UDP-N-acetylenolpyruvoylglucosamine reductase (318 aa).

Positions 38 to 204 constitute an FAD-binding PCMH-type domain; that stretch reads IGGVCPVIVE…LGIEILLKEG (167 aa). Residue Arg182 is part of the active site. Positions 212–229 are enriched in basic and acidic residues; that stretch reads SLKDKRDRRNSSQPENKK. Residues 212 to 232 form a disordered region; the sequence is SLKDKRDRRNSSQPENKKSAG. Ser233 serves as the catalytic Proton donor. Glu310 is a catalytic residue.

This sequence belongs to the MurB family. FAD is required as a cofactor.

It localises to the cytoplasm. The catalysed reaction is UDP-N-acetyl-alpha-D-muramate + NADP(+) = UDP-N-acetyl-3-O-(1-carboxyvinyl)-alpha-D-glucosamine + NADPH + H(+). It participates in cell wall biogenesis; peptidoglycan biosynthesis. Cell wall formation. This is UDP-N-acetylenolpyruvoylglucosamine reductase from Leptospira interrogans serogroup Icterohaemorrhagiae serovar Lai (strain 56601).